The following is a 341-amino-acid chain: RNA 3'-terminal phosphate cyclase (341 aa).

Residues Q100 and 283–287 (FLGDQ) each bind ATP. H307 (tele-AMP-histidine intermediate) is an active-site residue.

This sequence belongs to the RNA 3'-terminal cyclase family. Type 1 subfamily.

The protein localises to the cytoplasm. It carries out the reaction a 3'-end 3'-phospho-ribonucleotide-RNA + ATP = a 3'-end 2',3'-cyclophospho-ribonucleotide-RNA + AMP + diphosphate. Catalyzes the conversion of 3'-phosphate to a 2',3'-cyclic phosphodiester at the end of RNA. The mechanism of action of the enzyme occurs in 3 steps: (A) adenylation of the enzyme by ATP; (B) transfer of adenylate to an RNA-N3'P to produce RNA-N3'PP5'A; (C) and attack of the adjacent 2'-hydroxyl on the 3'-phosphorus in the diester linkage to produce the cyclic end product. The biological role of this enzyme is unknown but it is likely to function in some aspects of cellular RNA processing. This is RNA 3'-terminal phosphate cyclase (rtcA) from Pyrococcus horikoshii (strain ATCC 700860 / DSM 12428 / JCM 9974 / NBRC 100139 / OT-3).